A 61-amino-acid chain; its full sequence is Small ribosomal subunit protein uS14 (61 aa).

Zn(2+) is bound by residues Cys-24, Cys-27, Cys-40, and Cys-43.

It belongs to the universal ribosomal protein uS14 family. Zinc-binding uS14 subfamily. As to quaternary structure, part of the 30S ribosomal subunit. Contacts proteins S3 and S10. It depends on Zn(2+) as a cofactor.

Functionally, binds 16S rRNA, required for the assembly of 30S particles and may also be responsible for determining the conformation of the 16S rRNA at the A site. The sequence is that of Small ribosomal subunit protein uS14 from Streptococcus thermophilus (strain CNRZ 1066).